A 1200-amino-acid polypeptide reads, in one-letter code: MNFEGLDPGLAEFSPAMHSTLDPVLDAHLNPSLLQNVELDPEGVALEALPVQESVHIMEGVYSELHSVVAEVGVPVSVSHFDLHEEMLWVGSHGGHATSFFGPALERYSSFQVNGGDDIRQIQSLENGILFLTKNNLKYMARGGLIIFDYLLDENEDMHSVLLTDNSTLLVGGLQNHVLEIDLNTVQETQKYAVETPGVTIMRQTNRFFFCGHTSGKVSLRDLRSFKVEHEFDAFSGSLSDFDVHGNLLAACGFSSRLTGLACDRFLKVYDLRMMRAITPLQVHVDPAFLRFIPTYTSRLAIISQSGQCQFCEPTGLANPADIFHVNPVGPLLMTFDVSASKQALAFGDSEGCVHLWTDSPEPSFNPYSRETEFALPCLVDSLPPLDWSQDLLPLSLIPVPLTTDALLSDWPAANSAPAPRRAPPVDAEILRTMKKVGFIGYAPNPRTRLRNQIPYRLKESDHEFDNFSQVTESPTGREEEPLHTVSKKYRKVTIKYSKLGLEDFDFKHYNKTLFAGLEPHIPNAYCNCMIQVLYFLEPVRCLIQNHLCQKEFCLACELGFLFHMLDLSRGDPCQGSNFLRAFRTIPEASALGLILADSDEASGKGSLARLIQRWNRFILTQLHQDMQELEVPQAYRGAGGSFCSSGDSIIGQLFSCEMENCSLCRCGSETVRASSTLLFTLSYPEDKTGKNYDFAQVLKRSICLEQNTQAWCDNCEKYQPTIQTRNIRHLPDILVINCEVNSSKEADFWRLQAEVAFKIAVKKYGGEMKSKEFALADRKELRSPEGFLCSSIEELKNVWLPFSIRMKMTKNKGLDVCNWADEHELSSLGAPSQWGPARAEEELGVYVYDLMATVVHILDSRTGGSLVAHIKVGETYHQRKEGVTHQQWYLFNDFLIEPIDKYEAVQFDMNWKVPAILYYVKRNLNSRYNLNIKNPIEASVLLAEASLARKQRKTHTTFIPLMLNEMPQVGDLVGLDAEFVTLNEEEAELRSDGTKSTIKPSQMSVARITCVRGQGPNEGIPFIDDYISTQEQVVDYLTQYSGIKPGDLDAKISSKHLTTLKSTYLKLRFLIDIGVKFVGHGLQKDFRVINLMVPKDQVLDTVYLFHMPRKRMISLRFLAWYFLDLKIQGETHDSIEDARTALQLYRKYLELSKNGTEPESFHKVLKGLYEKGRKMDWKVPEPESQTSPKNAAVFSVLAL.

WD repeat units lie at residues 153 to 193 (DENE…QKYA), 195 to 231 (ETPG…VEHE), 244 to 280 (VHGN…AITP), and 328 to 367 (PVGP…SFNP). The tract at residues 368 to 484 (YSRETEFALP…PTGREEEPLH (117 aa)) is linker. The USP domain maps to 485–923 (TVSKKYRKVT…VPAILYYVKR (439 aa)). Ser-784 carries the phosphoserine modification. Residues 974-1146 (VGLDAEFVTL…EDARTALQLY (173 aa)) form the Exonuclease domain. Positions 977, 979, 1086, and 1138 each coordinate a divalent metal cation. Ser-1188 is subject to Phosphoserine.

Belongs to the peptidase C19 family. PAN2 subfamily. As to quaternary structure, forms a heterotrimer with an asymmetric homodimer of the regulatory subunit PAN3 to form the poly(A)-nuclease (PAN) deadenylation complex. Interacts with PAN3 isoform 1/Pan3L and isoform 3/Pan3S. Interacts with ZFP36. The cofactor is a divalent metal cation.

The protein localises to the cytoplasm. The protein resides in the P-body. It is found in the nucleus. It catalyses the reaction Exonucleolytic cleavage of poly(A) to 5'-AMP.. Positively regulated by the regulatory subunit PAN3. Catalytic subunit of the poly(A)-nuclease (PAN) deadenylation complex, one of two cytoplasmic mRNA deadenylases involved in general and miRNA-mediated mRNA turnover. PAN specifically shortens poly(A) tails of RNA and the activity is stimulated by poly(A)-binding protein (PABP). PAN deadenylation is followed by rapid degradation of the shortened mRNA tails by the CCR4-NOT complex. Deadenylated mRNAs are then degraded by two alternative mechanisms, namely exosome-mediated 3'-5' exonucleolytic degradation, or deadenylation-dependent mRNA decaping and subsequent 5'-3' exonucleolytic degradation by XRN1. Also acts as an important regulator of the HIF1A-mediated hypoxic response. Required for HIF1A mRNA stability independent of poly(A) tail length regulation. The chain is PAN2-PAN3 deadenylation complex catalytic subunit Pan2 from Mus musculus (Mouse).